A 115-amino-acid chain; its full sequence is Skin calcitonin gene-related peptide (115 aa).

The signal sequence occupies residues 1–25 (MVLLKISSLLAVLGLLVCQMYSSQA). A propeptide spans 26–69 (APARRALEPLPDRVTEAHRLLRALIRELTAEDMEASSSGAAHKR) (removed in mature form by a carboxypeptidase). Cys-71 and Cys-76 are disulfide-bonded. Residue Phe-106 is modified to Phenylalanine amide. A propeptide spans 107–115 (GRRRRSLHV) (removed in mature form by an endoprotease).

In terms of tissue distribution, skin, intestine and brain.

The protein resides in the secreted. Its function is as follows. CGRP induces vasodilation. It dilates a variety of vessels including the coronary, cerebral and systemic vasculature. Its abundance in the CNS also points toward a neurotransmitter or neuromodulator role. The protein is Skin calcitonin gene-related peptide of Phyllomedusa bicolor (Two-colored leaf frog).